The primary structure comprises 210 residues: MAMAGVFVLFSFVLCGFLPDAAFGAEVDCSRFPNATDKEGKDVLVCNKDLRPICGTDGVTYTNDCLLCAYSIEFGTNISKEHDGECKETVPMNCSSYANTTSEDGKVMVLCNRAFNPVCGTDGVTYDNECLLCAHKVEQGASVDKRHDGGCRKELAAVSVDCSEYPKPDCTAEDRPLCGSDNKTYGNKCNFCNAVVESNGTLTLSHFGKC.

A signal peptide spans 1–24 (MAMAGVFVLFSFVLCGFLPDAAFG). 3 consecutive Kazal-like domains span residues 25-88 (AEVD…ECKE), 89-153 (TVPM…GCRK), and 156-210 (AAVS…FGKC). 3 cysteine pairs are disulfide-bonded: cysteine 29/cysteine 68, cysteine 46/cysteine 65, and cysteine 54/cysteine 86. A glycan (N-linked (GlcNAc...) asparagine) is linked at asparagine 34. Residues asparagine 77, asparagine 93, and asparagine 99 are each glycosylated (N-linked (GlcNAc...) asparagine). Intrachain disulfides connect cysteine 94/cysteine 133, cysteine 111/cysteine 130, cysteine 119/cysteine 151, cysteine 162/cysteine 192, cysteine 170/cysteine 189, and cysteine 178/cysteine 210. An N-linked (GlcNAc...) asparagine; partial glycan is attached at asparagine 199.

The protein resides in the secreted. In terms of biological role, serine protease inhibitor. Inhibits trypsin. The protein is Ovomucoid of Gallus gallus (Chicken).